Consider the following 202-residue polypeptide: Polyamine-modulated factor 1 (202 aa).

Over residues Met1–Pro15 the composition is skewed to basic and acidic residues. Residues Met1–Asp26 are disordered. Residues Glu153–Leu194 are a coiled coil.

In terms of assembly, component of the MIS12 complex composed of MIS12, DSN1, NSL1 and PMF1. Interacts with COPS7A. Interacts via its coiled-coil domain with the leucine-zipper domain of NFE2L2. The interaction with NFE2L2 is required for the transcriptional regulation of SSAT.

The protein localises to the nucleus. It localises to the chromosome. Its subcellular location is the centromere. The protein resides in the kinetochore. Part of the MIS12 complex which is required for normal chromosome alignment and segregation and for kinetochore formation during mitosis. May act as a cotranscription partner of NFE2L2 involved in regulation of polyamine-induced transcription of SSAT. In Mus musculus (Mouse), this protein is Polyamine-modulated factor 1.